The primary structure comprises 127 residues: Putative truncated L-serine dehydratase YIL168W (127 aa).

Lysine 39 is subject to N6-(pyridoxal phosphate)lysine.

This sequence belongs to the serine/threonine dehydratase family. The cofactor is pyridoxal 5'-phosphate.

It localises to the cytoplasm. It carries out the reaction L-serine = pyruvate + NH4(+). The protein operates within carbohydrate biosynthesis; gluconeogenesis. In Saccharomyces cerevisiae (strain ATCC 204508 / S288c) (Baker's yeast), this protein is Putative truncated L-serine dehydratase YIL168W.